A 1026-amino-acid chain; its full sequence is Multidrug resistance protein MdtC (1026 aa).

A run of 11 helical transmembrane segments spans residues 16–36 (LLAL…PVAP), 333–353 (EVEQ…FLFL), 360–380 (LIPA…IYLC), 387–407 (LSLM…IVVL), 435–455 (VFSI…MGGI), 459–479 (LFHE…LIAL), 528–548 (WVLL…ISIP), 853–873 (LLLI…LYES), 897–917 (LFNA…IGLV), 953–973 (PILM…FSYG), and 984–1004 (ITIV…TPVV).

Belongs to the resistance-nodulation-cell division (RND) (TC 2.A.6) family. MdtC subfamily. In terms of assembly, part of a tripartite efflux system composed of MdtA, MdtB and MdtC. MdtC forms a heteromultimer with MdtB.

It is found in the cell inner membrane. This Edwardsiella ictaluri (strain 93-146) protein is Multidrug resistance protein MdtC.